The chain runs to 393 residues: S-adenosylmethionine synthase 2 (393 aa).

Glu9 contacts Mg(2+). His15 serves as a coordination point for ATP. Residue Glu43 coordinates K(+). L-methionine is bound by residues Glu56 and Gln99. Residues Asp167–Lys169, Ser235–Phe238, Asp246, Arg252–Lys253, Ala269, Lys273, and Lys277 each bind ATP. Asp246 is a binding site for L-methionine. Lys277 provides a ligand contact to L-methionine.

This sequence belongs to the AdoMet synthase family. Homotetramer. The cofactor is Mn(2+). Mg(2+) serves as cofactor. Requires Co(2+) as cofactor. It depends on K(+) as a cofactor.

Its subcellular location is the cytoplasm. The enzyme catalyses L-methionine + ATP + H2O = S-adenosyl-L-methionine + phosphate + diphosphate. It participates in amino-acid biosynthesis; S-adenosyl-L-methionine biosynthesis; S-adenosyl-L-methionine from L-methionine: step 1/1. In terms of biological role, catalyzes the formation of S-adenosylmethionine from methionine and ATP. The reaction comprises two steps that are both catalyzed by the same enzyme: formation of S-adenosylmethionine (AdoMet) and triphosphate, and subsequent hydrolysis of the triphosphate. May be involved in the synthesis of betain in response to abiotic stress such as high salinity. This is S-adenosylmethionine synthase 2 (SAMS2) from Beta vulgaris (Sugar beet).